We begin with the raw amino-acid sequence, 237 residues long: uncharacterized protein (237 aa).

This is an uncharacterized protein from Schizosaccharomyces pombe (strain 972 / ATCC 24843) (Fission yeast).